The sequence spans 224 residues: Histone H1.03 (224 aa).

2 stretches are compositionally biased toward low complexity: residues 1–22 (MAET…AKAA) and 30–42 (AAGG…PAGP). Disordered regions lie at residues 1-43 (MAET…AGPS) and 99-224 (QTKG…PKKK). Residues 40 to 113 (AGPSVTELIT…GASGSFRLSK (74 aa)) form the H15 domain. 4 stretches are compositionally biased toward basic residues: residues 122 to 137 (APKK…KPAA), 145 to 162 (KKPK…KAKK), 170 to 188 (KAAK…KKAV), and 197 to 224 (KAVK…PKKK).

The protein belongs to the histone H1/H5 family.

The protein localises to the nucleus. It localises to the chromosome. In terms of biological role, histones H1 are necessary for the condensation of nucleosome chains into higher-order structures. The protein is Histone H1.03 of Gallus gallus (Chicken).